We begin with the raw amino-acid sequence, 353 residues long: uncharacterized protein (353 aa).

Residues 267 to 287 (GLPLVVIEAMAFGLPIVAFNC) traverse the membrane as a helical segment.

This sequence belongs to the glycosyltransferase group 1 family. Glycosyltransferase 4 subfamily.

Its subcellular location is the membrane. This is an uncharacterized protein from Haemophilus influenzae (strain ATCC 51907 / DSM 11121 / KW20 / Rd).